Here is an 807-residue protein sequence, read N- to C-terminus: Glycerol-3-phosphate acyltransferase (807 aa).

The short motif at 308 to 313 is the HXXXXD motif element; sequence CHRSHM.

Belongs to the GPAT/DAPAT family.

The protein localises to the cell inner membrane. It catalyses the reaction sn-glycerol 3-phosphate + an acyl-CoA = a 1-acyl-sn-glycero-3-phosphate + CoA. Its pathway is phospholipid metabolism; CDP-diacylglycerol biosynthesis; CDP-diacylglycerol from sn-glycerol 3-phosphate: step 1/3. This is Glycerol-3-phosphate acyltransferase from Shewanella baltica (strain OS195).